Reading from the N-terminus, the 226-residue chain is Pre-mRNA-splicing factor SPF27 (226 aa).

Ala-2 bears the N-acetylalanine mark. Position 94 is a phosphoserine (Ser-94). A coiled-coil region spans residues 139–223 (YNENLVHMIE…HGEANKENIR (85 aa)).

This sequence belongs to the SPF27 family. In terms of assembly, component of the pre-catalytic and catalytic spliceosome complexes. Component of the postcatalytic spliceosome P complex. Component of the PRP19-CDC5L splicing complex composed of a core complex comprising a homotetramer of PRPF19, CDC5L, PLRG1 and BCAS2, and at least three less stably associated proteins CTNNBL1, CWC15 and HSPA8. Interacts directly in the complex with PRPF19, CDC5L and PLRG1.

It is found in the nucleus. It localises to the nucleolus. Functionally, required for pre-mRNA splicing as component of the activated spliceosome. Component of the PRP19-CDC5L complex that forms an integral part of the spliceosome and is required for activating pre-mRNA splicing. May have a scaffolding role in the spliceosome assembly as it contacts all other components of the core complex. The PRP19-CDC5L complex may also play a role in the response to DNA damage (DDR). The protein is Pre-mRNA-splicing factor SPF27 (BCAS2) of Pongo abelii (Sumatran orangutan).